Consider the following 542-residue polypeptide: Phosphoenolpyruvate carboxykinase (ATP) (542 aa).

Substrate contacts are provided by R67, Y208, and K214. Residues K214, H233, and 249–257 (GLSGTGKTT) contribute to the ATP site. Residues K214 and H233 each coordinate Mn(2+). D270 serves as a coordination point for Mn(2+). Residues E298, R334, 450–451 (RI), and T456 contribute to the ATP site. Position 334 (R334) interacts with substrate.

It belongs to the phosphoenolpyruvate carboxykinase (ATP) family. In terms of assembly, monomer. It depends on Mn(2+) as a cofactor.

Its subcellular location is the cytoplasm. The enzyme catalyses oxaloacetate + ATP = phosphoenolpyruvate + ADP + CO2. It participates in carbohydrate biosynthesis; gluconeogenesis. Functionally, involved in the gluconeogenesis. Catalyzes the conversion of oxaloacetate (OAA) to phosphoenolpyruvate (PEP) through direct phosphoryl transfer between the nucleoside triphosphate and OAA. This chain is Phosphoenolpyruvate carboxykinase (ATP), found in Vibrio campbellii (strain ATCC BAA-1116).